The sequence spans 70 residues: uncharacterized protein (70 aa).

2 helical membrane passes run 19–39 (VIAL…VVGL) and 40–60 (LFKL…VRKF).

It is found in the cell membrane. This is an uncharacterized protein from Streptomyces coelicolor (strain ATCC BAA-471 / A3(2) / M145).